Reading from the N-terminus, the 483-residue chain is 1-aminocyclopropane-1-carboxylate synthase 2 (483 aa).

Position 275 is an N6-(pyridoxal phosphate)lysine (lysine 275).

It belongs to the class-I pyridoxal-phosphate-dependent aminotransferase family. Pyridoxal 5'-phosphate serves as cofactor.

The enzyme catalyses S-adenosyl-L-methionine = 1-aminocyclopropane-1-carboxylate + S-methyl-5'-thioadenosine + H(+). The protein operates within alkene biosynthesis; ethylene biosynthesis via S-adenosyl-L-methionine; ethylene from S-adenosyl-L-methionine: step 1/2. Catalyzes the formation of 1-aminocyclopropane-1-carboxylate, a direct precursor of ethylene in higher plants. Involved in defense response by producing ethylene after pathogen infection. Involved in several phosphate deficiency-induced adaptive responses, such as lateral root elongation. This is 1-aminocyclopropane-1-carboxylate synthase 2 from Oryza sativa subsp. japonica (Rice).